The chain runs to 194 residues: Ras-related protein Rab-22A (194 aa).

12–20 (GDTGVGKSS) is a binding site for GTP. Positions 34 to 42 (INPTIGASF) match the Effector region motif. GTP-binding positions include 60 to 64 (DTAGQ), 118 to 121 (NKCD), and 148 to 150 (SAK). The segment at 170–194 (DANPASGGKGFKLRRQPSEPKRSCC) is disordered. The span at 185–194 (QPSEPKRSCC) shows a compositional bias: basic and acidic residues. 2 S-geranylgeranyl cysteine lipidation sites follow: C193 and C194.

The protein belongs to the small GTPase superfamily. Rab family. As to quaternary structure, binds EEA1. Interacts (in its GTP-bound form) with RINL. Interacts directly with ZFYVE20. Interacts (in its GTP-bound form) with RABGEF1. In terms of tissue distribution, detected in brain and heart, and at lower levels in lung and spleen.

Its subcellular location is the endosome membrane. The protein localises to the cell membrane. It localises to the early endosome. The protein resides in the late endosome. It is found in the cell projection. Its subcellular location is the ruffle. The protein localises to the cytoplasmic vesicle. It localises to the phagosome. The protein resides in the phagosome membrane. In terms of biological role, plays a role in endocytosis and intracellular protein transport. Mediates trafficking of TF from early endosomes to recycling endosomes. Required for NGF-mediated endocytosis of NTRK1, and subsequent neurite outgrowth. Binds GTP and GDP and has low GTPase activity. Alternates between a GTP-bound active form and a GDP-bound inactive form. The protein is Ras-related protein Rab-22A (Rab22a) of Mus musculus (Mouse).